We begin with the raw amino-acid sequence, 316 residues long: 2,3-dihydroxyphenylpropionate/2,3-dihydroxicinnamic acid 1,2-dioxygenase (316 aa).

The active-site Proton donor is the His118. The active-site Proton acceptor is the His182.

It belongs to the LigB/MhpB extradiol dioxygenase family. As to quaternary structure, homotetramer. The cofactor is Fe(2+).

The enzyme catalyses 3-(2,3-dihydroxyphenyl)propanoate + O2 = (2Z,4E)-2-hydroxy-6-oxonona-2,4-dienedioate + H(+). The catalysed reaction is (2E)-3-(2,3-dihydroxyphenyl)prop-2-enoate + O2 = (2Z,4E,7E)-2-hydroxy-6-oxonona-2,4,7-trienedioate + H(+). Its pathway is aromatic compound metabolism; 3-phenylpropanoate degradation. Functionally, catalyzes the non-heme iron(II)-dependent oxidative cleavage of 2,3-dihydroxyphenylpropionic acid and 2,3-dihydroxicinnamic acid into 2-hydroxy-6-ketononadienedioate and 2-hydroxy-6-ketononatrienedioate, respectively. This is 2,3-dihydroxyphenylpropionate/2,3-dihydroxicinnamic acid 1,2-dioxygenase from Mycolicibacterium vanbaalenii (strain DSM 7251 / JCM 13017 / BCRC 16820 / KCTC 9966 / NRRL B-24157 / PYR-1) (Mycobacterium vanbaalenii).